The sequence spans 241 residues: MQNNNDILKAQSPAALAEEYIVKSIWQDVFPAGSNLPSERDLADKIGVTRTTLREVLQRLARDGWLTIQHGKPTKVNNIWDAAGPNIIETLIALDMQSAPLIIDNMLSLRSKMSESYIYEAVKNSPQKSTALFAELEQLQNTAQDYTEFDYQLFRQFTVVANKPFYRLIFNSLKGVYQRIGLLFFKEKKHRELTKQFYLEMQQICLEGNADAVVDCIRKHNLRSSTYWKAILERLPQNLSD.

In terms of domain architecture, HTH gntR-type spans 11-79 (QSPAALAEEY…HGKPTKVNNI (69 aa)). Residues 39-58 (ERDLADKIGVTRTTLREVLQ) constitute a DNA-binding region (H-T-H motif).

In terms of assembly, homodimer.

The protein localises to the cytoplasm. Multifunctional regulator of fatty acid metabolism. This is Fatty acid metabolism regulator protein from Haemophilus influenzae (strain ATCC 51907 / DSM 11121 / KW20 / Rd).